The sequence spans 640 residues: G protein-coupled receptor kinase 1 (640 aa).

An N-terminal region spans residues 1–201 (MEIENIVANT…LEKRPVDKHT (201 aa)). The RGS domain maps to 52 to 187 (YAFVVEKQPI…IQTMYFHRFL (136 aa)). Residues 202-469 (FRLYRVLGKG…AEEIRAHPFF (268 aa)) form the Protein kinase domain. ATP is bound by residues 208 to 216 (LGKGGFGEV) and Lys231. Asp327 acts as the Proton acceptor in catalysis. The 66-residue stretch at 479–544 (EPVPWKKMEA…GCVSIPWQSE (66 aa)) folds into the AGC-kinase C-terminal domain. Positions 610–640 (GVDQQQPSTSAKPAAVRSSRAASASGRTSMI) are disordered. The segment covering 619 to 640 (SAKPAAVRSSRAASASGRTSMI) has biased composition (low complexity).

The protein belongs to the protein kinase superfamily. AGC Ser/Thr protein kinase family. GPRK subfamily.

It catalyses the reaction [G-protein-coupled receptor] + ATP = [G-protein-coupled receptor]-phosphate + ADP + H(+). In terms of biological role, specifically phosphorylates the activated forms of G protein-coupled receptors. The sequence is that of G protein-coupled receptor kinase 1 (grk-1) from Caenorhabditis briggsae.